Consider the following 1201-residue polypeptide: ATPase with bromodomain protein abo2 (1201 aa).

2 disordered regions span residues 1–223 (MRRR…MRGP) and 305–324 (CDSD…TSDV). The span at 13 to 24 (DDNEDNEEDDDY) shows a compositional bias: acidic residues. Basic and acidic residues predominate over residues 29 to 38 (HSEKSEDHSN). Over residues 66–89 (FSSLQKHLNTETPSFSVSIENPSK) the composition is skewed to polar residues. Residues 129–146 (TDNNEDESTTFKDEEDDL) are compositionally biased toward acidic residues. Residues 212 to 221 (RRGRRKRKMR) show a composition bias toward basic residues. Positions 312–323 (ELSSTSSEQTSD) are enriched in low complexity. 413–420 (GPPGTGKT) serves as a coordination point for ATP. The 130-residue stretch at 897-1026 (KIKNKIQVKL…AHAELNVDEL (130 aa)) folds into the Bromo domain.

It belongs to the AAA ATPase family.

It localises to the nucleus. It catalyses the reaction ATP + H2O = ADP + phosphate + H(+). Its function is as follows. Probable ATPase which may play a role in nucleosome organization. The protein is ATPase with bromodomain protein abo2 of Schizosaccharomyces pombe (strain 972 / ATCC 24843) (Fission yeast).